The primary structure comprises 111 residues: Protein IDA-LIKE 5 (111 aa).

The N-terminal stretch at 1–27 (MGNKRIKAMMILVVMIMMVFSWRICEA) is a signal peptide. Basic residues predominate over residues 46-56 (RRPNPRNHHHQ). The interval 46–65 (RRPNPRNHHHQNQGFNGDDY) is disordered.

Expressed mainly in flowers. Lower levels in buds and seedlings. Detected in vascular tissues and in hydathodes.

Its subcellular location is the secreted. The protein localises to the extracellular space. Its function is as follows. May be involved in floral abscission. The protein is Protein IDA-LIKE 5 (IDL5) of Arabidopsis thaliana (Mouse-ear cress).